Here is a 338-residue protein sequence, read N- to C-terminus: Glyceraldehyde-3-phosphate dehydrogenase GAPC2, cytosolic (338 aa).

NAD(+) contacts are provided by residues 15–16 (RI), D37, and R84. 155 to 157 (SCT) is a binding site for D-glyceraldehyde 3-phosphate. Residue C156 is the Nucleophile of the active site. Residue C156 is modified to S-glutathionyl cysteine; transient; alternate. C156 is subject to S-nitrosocysteine; transient; alternate. C160 bears the S-nitrosocysteine; transient mark. D-glyceraldehyde 3-phosphate is bound by residues T186, 215-216 (TG), and R238. N320 provides a ligand contact to NAD(+).

This sequence belongs to the glyceraldehyde-3-phosphate dehydrogenase family. Homotetramer. Interacts with PLDDELTA. Binds to DPB3-1/NF-YC10 in response to heat-stress; this interaction promotes DPB3-1/NF-YC10 DNA-binding ability to its target promoter. Post-translationally, S-glutathionylation at Cys-156 in the presence of oxidized glutathione (GSSG). S-nitrosylation at Cys-156 and Cys-160 in the presence of S-nitrosoglutathione (GSNO) or sodium nitroprusside (SNP). These reactions may be both a protective mechanism against irreversible oxidation and a mean to store inhibited enzyme in a recoverable form.

It is found in the cytoplasm. The protein resides in the nucleus. The enzyme catalyses D-glyceraldehyde 3-phosphate + phosphate + NAD(+) = (2R)-3-phospho-glyceroyl phosphate + NADH + H(+). It functions in the pathway carbohydrate degradation; glycolysis; pyruvate from D-glyceraldehyde 3-phosphate: step 1/5. Its activity is regulated as follows. Inhibition by oxidized glutathione (GSSG), S-nitrosoglutathione (GSNO) and hydrogen peroxide. Functionally, key enzyme in glycolysis that catalyzes the first step of the pathway by converting D-glyceraldehyde 3-phosphate (G3P) into 3-phospho-D-glyceroyl phosphate. Essential for the maintenance of cellular ATP levels and carbohydrate metabolism. Binds DNA in vitro. Together with DNA polymerase II subunit B3-1 (DPB3-1) and GAPC1, enhances heat tolerance and promotes the expression of heat-inducible genes. The sequence is that of Glyceraldehyde-3-phosphate dehydrogenase GAPC2, cytosolic from Arabidopsis thaliana (Mouse-ear cress).